The sequence spans 114 residues: Protein ORF3 (114 aa).

Hydrophobic regions lie at residues 6–22 and 33–53; these read CALGLFCCCSSCFCLCC and AVVGGAAAVPAVVSGVTGLIL. The interval 28–68 is interaction with host HPX; the sequence is VSRLAAVVGGAAAVPAVVSGVTGLILSPSQSPIFIQPTPLP. A homodimerization, and interaction with host AMBP/bikunin region spans residues 72–114; it reads PLRPGLDLAFANQPGHLAPLGEIRPSAPPLPPVADLPQPGLRR. Residues 91-114 form a disordered region; the sequence is LGEIRPSAPPLPPVADLPQPGLRR. The tract at residues 95–104 is interaction with host SRC, HCK, FYN, PIK3R3 and GRB2; it reads RPSAPPLPPV. Positions 96-99 match the PTAP/PSAP motif motif; the sequence is PSAP.

Belongs to the hepevirus ORF3 protein family. As to quaternary structure, forms homooligomers. Interacts with host SRC, HCK, FYN, PIK3R3 and GRB2 (via SH3 domain); binding does not activate the kinases. Interacts with host AMBP/bikunin and AMBP/alpha-1-microglobulin peptides. Interacts with host HPX/hemopexin. Interacts (when phosphorylated) with capsid protein ORF2. Interacts with host TSG101; this interaction plays a role in viral release from the host cell. Interacts with host SIRPA; this interaction down-regulates the phosphorylation of host IRF3. Palmitoylated in the N-terminus.

The protein localises to the host endoplasmic reticulum membrane. The protein resides in the host cytoplasm. Its subcellular location is the host cytoskeleton. It localises to the virion. It is found in the host cell membrane. Functionally, small multifunctional phosphoprotein involved in virion morphogenesis, egress and counteracting host innate immunity. Plays critical roles in the final steps of viral release by interacting with host TSG101, a member of the vacuolar protein-sorting pathway and using other cellular host proteins involved in vesicle formation pathway. Also acts as a viroporin and forms ion conductive pores allowing viral particle release. Impairs the generation of type I interferon by down-regulating host TLR3 and TLR7 as well as their downstream signaling pathways. Down-regulates the phosphorylation of host IRF3 via the interaction with host SIRP-alpha, thereby inhibiting IFN-I expression. Interacts with host microtubules. The chain is Protein ORF3 from Hepatitis E virus genotype 2 (isolate Human/Mexico) (HEV-2).